Consider the following 319-residue polypeptide: Ribosomal RNA small subunit methyltransferase H (319 aa).

S-adenosyl-L-methionine is bound by residues 39 to 41 (GGH), Asp59, Phe83, Asp104, and Gln111.

The protein belongs to the methyltransferase superfamily. RsmH family.

It localises to the cytoplasm. The enzyme catalyses cytidine(1402) in 16S rRNA + S-adenosyl-L-methionine = N(4)-methylcytidine(1402) in 16S rRNA + S-adenosyl-L-homocysteine + H(+). Specifically methylates the N4 position of cytidine in position 1402 (C1402) of 16S rRNA. This is Ribosomal RNA small subunit methyltransferase H from Ralstonia nicotianae (strain ATCC BAA-1114 / GMI1000) (Ralstonia solanacearum).